A 92-amino-acid chain; its full sequence is Small ribosomal subunit protein uS19 (92 aa).

It belongs to the universal ribosomal protein uS19 family.

In terms of biological role, protein S19 forms a complex with S13 that binds strongly to the 16S ribosomal RNA. In Ruegeria pomeroyi (strain ATCC 700808 / DSM 15171 / DSS-3) (Silicibacter pomeroyi), this protein is Small ribosomal subunit protein uS19.